Here is a 2435-residue protein sequence, read N- to C-terminus: Highly reducing polyketide synthase ATR6 (2435 aa).

In terms of domain architecture, Ketosynthase family 3 (KS3) spans 18 to 450 (AEPIAIVSAA…GSNAHVVLDN (433 aa)). Residues Cys192, His331, and His371 each act as for beta-ketoacyl synthase activity in the active site. The malonyl-CoA:ACP transacylase (MAT) domain stretch occupies residues 586-883 (FVFTGQGAQW…EIGPSAALGG (298 aa)). Residue Ser682 is the For malonyltransferase activity of the active site. Positions 979–1125 (HDLLGGKVLG…GLVRLALNAS (147 aa)) are N-terminal hotdog fold. Residues 979-1291 (HDLLGGKVLG…LRGISMTSVG (313 aa)) form a dehydratase (DH) domain region. The PKS/mFAS DH domain occupies 979–1296 (HDLLGGKVLG…MTSVGLQGNV (318 aa)). Catalysis depends on His1011, which acts as the For beta-hydroxyacyl dehydratase activity. The tract at residues 1141-1296 (QYPTPARFWY…MTSVGLQGNV (156 aa)) is C-terminal hotdog fold. The enoylreductase (ER) domain stretch occupies residues 1724-2037 (GILDTLHFAE…DHNRLRNVVI (314 aa)). Residues 2062 to 2301 (PEQTYLLVGK…ITGIAVPQPG (240 aa)) are catalytic ketoreductase (KRc) domain. Positions 2353–2429 (VLLSSAVGVL…VLCQKIISRM (77 aa)) constitute a Carrier domain. An O-(pantetheine 4'-phosphoryl)serine modification is found at Ser2389.

It participates in mycotoxin biosynthesis. In terms of biological role, highly reducing polyketide synthase; part of the core atranone cluster (CAC) which products are predicted to catalyze most or all steps of mycotoxin atranone synthesis, starting from geranylgeranyl pyrophosphate (GGPP). The initial cyclization of GGPP to dolabellane is probably performed by the terpene cyclase ATR13. The Baeyer-Villiger oxidation near the end of the atranone synthesis, which converts atranones D and E to atranones F and G is predicted to be catalyzed by the monooxygenase ATR8. Of the CAC's other predicted gene products, the reducing PKS ATR6 might synthesize a polyketide chain. This polyketide is probably transferred onto the atranone backbone by the polyketide transferase ATR5. Other predicted CAC products include 4 oxygenases (ATR2, ATR3, ATR4, and ATR14), 3 short-chain reductases (ATR7, ATR9, and ATR10), and a methyltransferase (ATR12). These may all be involved in the various steps of atranone biosynthesis, although their specific roles must await experimental determination. This is Highly reducing polyketide synthase ATR6 from Stachybotrys chlorohalonatus (strain IBT 40285).